The sequence spans 553 residues: Formate--tetrahydrofolate ligase (553 aa).

An ATP-binding site is contributed by threonine 56 to threonine 63.

The protein belongs to the formate--tetrahydrofolate ligase family.

It catalyses the reaction (6S)-5,6,7,8-tetrahydrofolate + formate + ATP = (6R)-10-formyltetrahydrofolate + ADP + phosphate. It participates in one-carbon metabolism; tetrahydrofolate interconversion. This is Formate--tetrahydrofolate ligase from Haloarcula marismortui (strain ATCC 43049 / DSM 3752 / JCM 8966 / VKM B-1809) (Halobacterium marismortui).